The following is a 101-amino-acid chain: Small ribosomal subunit protein uS14 (101 aa).

This sequence belongs to the universal ribosomal protein uS14 family. Part of the 30S ribosomal subunit. Contacts proteins S3 and S10.

Functionally, binds 16S rRNA, required for the assembly of 30S particles and may also be responsible for determining the conformation of the 16S rRNA at the A site. The polypeptide is Small ribosomal subunit protein uS14 (Methylobacterium sp. (strain 4-46)).